The chain runs to 350 residues: S-adenosylmethionine:tRNA ribosyltransferase-isomerase (350 aa).

Belongs to the QueA family. Monomer.

The protein resides in the cytoplasm. It carries out the reaction 7-aminomethyl-7-carbaguanosine(34) in tRNA + S-adenosyl-L-methionine = epoxyqueuosine(34) in tRNA + adenine + L-methionine + 2 H(+). Its pathway is tRNA modification; tRNA-queuosine biosynthesis. Functionally, transfers and isomerizes the ribose moiety from AdoMet to the 7-aminomethyl group of 7-deazaguanine (preQ1-tRNA) to give epoxyqueuosine (oQ-tRNA). This Saccharophagus degradans (strain 2-40 / ATCC 43961 / DSM 17024) protein is S-adenosylmethionine:tRNA ribosyltransferase-isomerase.